A 307-amino-acid polypeptide reads, in one-letter code: 4-hydroxythreonine-4-phosphate dehydrogenase (307 aa).

Positions 126 and 127 each coordinate substrate. A divalent metal cation is bound by residues H156, H195, and H251. Positions 259, 268, and 277 each coordinate substrate.

The protein belongs to the PdxA family. In terms of assembly, homodimer. The cofactor is Zn(2+). Requires Mg(2+) as cofactor. It depends on Co(2+) as a cofactor.

It localises to the cytoplasm. The enzyme catalyses 4-(phosphooxy)-L-threonine + NAD(+) = 3-amino-2-oxopropyl phosphate + CO2 + NADH. The protein operates within cofactor biosynthesis; pyridoxine 5'-phosphate biosynthesis; pyridoxine 5'-phosphate from D-erythrose 4-phosphate: step 4/5. In terms of biological role, catalyzes the NAD(P)-dependent oxidation of 4-(phosphooxy)-L-threonine (HTP) into 2-amino-3-oxo-4-(phosphooxy)butyric acid which spontaneously decarboxylates to form 3-amino-2-oxopropyl phosphate (AHAP). This is 4-hydroxythreonine-4-phosphate dehydrogenase from Helicobacter pylori (strain J99 / ATCC 700824) (Campylobacter pylori J99).